The sequence spans 285 residues: Small ribosomal subunit protein uS2 (285 aa).

The segment at 262–285 (NDDWNEDDTAPAAPGAASWGGAAF) is disordered. A compositionally biased stretch (low complexity) spans 271 to 285 (APAAPGAASWGGAAF).

Belongs to the universal ribosomal protein uS2 family. In terms of assembly, component of the small ribosomal subunit. Mature ribosomes consist of a small (40S) and a large (60S) subunit. The 40S subunit contains about 33 different proteins and 1 molecule of RNA (18S). The 60S subunit contains about 49 different proteins and 3 molecules of RNA (28S, 5.8S and 5S). Interacts with ribosomal protein S21.

The protein localises to the cytoplasm. Required for the assembly and/or stability of the 40S ribosomal subunit. Required for the processing of the 20S rRNA-precursor to mature 18S rRNA in a late step of the maturation of 40S ribosomal subunits. In Anopheles gambiae (African malaria mosquito), this protein is Small ribosomal subunit protein uS2.